Here is a 520-residue protein sequence, read N- to C-terminus: Amine oxidase [flavin-containing] B (520 aa).

Ser2 carries the N-acetylserine modification. Over 2-489 (SSKCDVVVVG…TFLQRHLPSV (488 aa)) the chain is Cytoplasmic. Lys52 bears the N6-acetyllysine mark. An S-8alpha-FAD cysteine modification is found at Cys397. The helical; Anchor for type IV membrane protein transmembrane segment at 490–516 (PGLLKLIGLTTIFSATALGFLAHKRGL) threads the bilayer. Over 517 to 520 (LVRI) the chain is Mitochondrial intermembrane.

As to quaternary structure, monomer, homo- or heterodimer (containing two subunits of similar size). Each subunit contains a covalently bound flavin. Enzymatically active as monomer. It depends on FAD as a cofactor.

The protein resides in the mitochondrion outer membrane. It carries out the reaction a secondary aliphatic amine + O2 + H2O = a primary amine + an aldehyde + H2O2. It catalyses the reaction a primary methyl amine + O2 + H2O = an aldehyde + H2O2 + NH4(+). The catalysed reaction is benzylamine + O2 + H2O = benzaldehyde + H2O2 + NH4(+). The enzyme catalyses (R)-adrenaline + O2 + H2O = (R)-3,4-dihydroxymandelaldehyde + methylamine + H2O2. It carries out the reaction dopamine + O2 + H2O = 3,4-dihydroxyphenylacetaldehyde + H2O2 + NH4(+). It catalyses the reaction tyramine + O2 + H2O = (4-hydroxyphenyl)acetaldehyde + H2O2 + NH4(+). The catalysed reaction is (R)-noradrenaline + O2 + H2O = (R)-3,4-dihydroxymandelaldehyde + H2O2 + NH4(+). The enzyme catalyses 2-phenylethylamine + O2 + H2O = 2-phenylacetaldehyde + H2O2 + NH4(+). It carries out the reaction N-acetylputrescine + O2 + H2O = 4-acetamidobutanal + H2O2 + NH4(+). In terms of biological role, catalyzes the oxidative deamination of primary and some secondary amines such as neurotransmitters, and exogenous amines including the tertiary amine, neurotoxin 1-methyl-4-phenyl-1,2,3,6-tetrahydropyridine (MPTP), with concomitant reduction of oxygen to hydrogen peroxide and participates in the metabolism of neuroactive and vasoactive amines in the central nervous system and peripheral tissues. Preferentially degrades benzylamine and phenylethylamine. This Bos taurus (Bovine) protein is Amine oxidase [flavin-containing] B.